The following is a 188-amino-acid chain: Elongation factor P (188 aa).

Lysine 34 carries the N6-(3,6-diaminohexanoyl)-5-hydroxylysine modification.

The protein belongs to the elongation factor P family. May be beta-lysylated on the epsilon-amino group of Lys-34 by the combined action of EpmA and EpmB, and then hydroxylated on the C5 position of the same residue by EpmC (if this protein is present). Lysylation is critical for the stimulatory effect of EF-P on peptide-bond formation. The lysylation moiety may extend toward the peptidyltransferase center and stabilize the terminal 3-CCA end of the tRNA. Hydroxylation of the C5 position on Lys-34 may allow additional potential stabilizing hydrogen-bond interactions with the P-tRNA.

Its subcellular location is the cytoplasm. It participates in protein biosynthesis; polypeptide chain elongation. Functionally, involved in peptide bond synthesis. Alleviates ribosome stalling that occurs when 3 or more consecutive Pro residues or the sequence PPG is present in a protein, possibly by augmenting the peptidyl transferase activity of the ribosome. Modification of Lys-34 is required for alleviation. This is Elongation factor P from Enterobacter sp. (strain 638).